A 300-amino-acid polypeptide reads, in one-letter code: Flaviolin linalyltransferase (300 aa).

This sequence belongs to the aromatic prenyltransferase family. Monomer.

It catalyses the reaction flaviolin + (2E)-geranyl diphosphate = 3-linalylflaviolin + diphosphate. With respect to regulation, does not require magnesium or any other divalent metal ions for activity. In terms of biological role, involved in the biosynthesis of furanonaphthoquinone I (FNQ I). Catalyzes C- and O-prenylations of different phenolic substrates. With flaviolin as substrate, catalyzes the formation of a carbon-carbon-bond between C-3 (rather than C-1) of geranyl diphosphate and C-3 of flaviolin. With 1,3-dihydroxynaphthalene and 4-hydroxybenzoate as substrates, catalyzes O-prenylations. The polypeptide is Flaviolin linalyltransferase (Streptomyces virginiae (Streptomyces cinnamonensis)).